We begin with the raw amino-acid sequence, 453 residues long: Ribosomal protein uS12 methylthiotransferase RimO (453 aa).

Positions 6–116 (PKVGFVSLGC…VMEAVHEALP (111 aa)) constitute an MTTase N-terminal domain. The [4Fe-4S] cluster site is built by Cys15, Cys51, Cys80, Cys147, Cys151, and Cys154. The region spanning 133–370 (LTPRHYAYLK…MEKQAQISAA (238 aa)) is the Radical SAM core domain. The 69-residue stretch at 373–441 (EAKIGTVQQC…DHDLYGDALP (69 aa)) folds into the TRAM domain.

Belongs to the methylthiotransferase family. RimO subfamily. [4Fe-4S] cluster is required as a cofactor.

It is found in the cytoplasm. The enzyme catalyses L-aspartate(89)-[ribosomal protein uS12]-hydrogen + (sulfur carrier)-SH + AH2 + 2 S-adenosyl-L-methionine = 3-methylsulfanyl-L-aspartate(89)-[ribosomal protein uS12]-hydrogen + (sulfur carrier)-H + 5'-deoxyadenosine + L-methionine + A + S-adenosyl-L-homocysteine + 2 H(+). Its function is as follows. Catalyzes the methylthiolation of an aspartic acid residue of ribosomal protein uS12. This is Ribosomal protein uS12 methylthiotransferase RimO from Stenotrophomonas maltophilia (strain R551-3).